The following is a 273-amino-acid chain: Ribosomal RNA small subunit methyltransferase A (273 aa).

N20, L22, G47, E68, D90, and N110 together coordinate S-adenosyl-L-methionine.

Belongs to the class I-like SAM-binding methyltransferase superfamily. rRNA adenine N(6)-methyltransferase family. RsmA subfamily.

Its subcellular location is the cytoplasm. It catalyses the reaction adenosine(1518)/adenosine(1519) in 16S rRNA + 4 S-adenosyl-L-methionine = N(6)-dimethyladenosine(1518)/N(6)-dimethyladenosine(1519) in 16S rRNA + 4 S-adenosyl-L-homocysteine + 4 H(+). Specifically dimethylates two adjacent adenosines (A1518 and A1519) in the loop of a conserved hairpin near the 3'-end of 16S rRNA in the 30S particle. May play a critical role in biogenesis of 30S subunits. The sequence is that of Ribosomal RNA small subunit methyltransferase A from Chlorobium luteolum (strain DSM 273 / BCRC 81028 / 2530) (Pelodictyon luteolum).